Here is a 324-residue protein sequence, read N- to C-terminus: AT-hook motif nuclear-localized protein 24 (324 aa).

Over residues 1 to 12 (MDPVQSHGSQSS) the composition is skewed to polar residues. 2 disordered regions span residues 1-122 (MDPV…KPPI) and 262-324 (MQTP…RPPY). Positions 24-33 (LHLQQQQQEF) are enriched in low complexity. Over residues 69-79 (NIDNIANNSGS) the composition is skewed to polar residues. Over residues 88-99 (GGSGEGGGGSGG) the composition is skewed to gly residues. A DNA-binding region (a.T hook) is located at residues 105–117 (RRPRGRPAGSKNK). The 140-residue stretch at 129–268 (ANALRTHVME…EDEMQTPVHG (140 aa)) folds into the PPC domain. Residues 280–297 (MMGQQLQHQQQAMSGHQG) are compositionally biased toward low complexity. Residues 304 to 318 (GSVQLQQQHDQSYWS) show a composition bias toward polar residues.

It localises to the nucleus. Transcription factor that specifically binds AT-rich DNA sequences related to the nuclear matrix attachment regions (MARs). In Arabidopsis thaliana (Mouse-ear cress), this protein is AT-hook motif nuclear-localized protein 24.